A 368-amino-acid polypeptide reads, in one-letter code: 4-hydroxy-3-methylbut-2-en-1-yl diphosphate synthase (flavodoxin) (368 aa).

[4Fe-4S] cluster is bound by residues cysteine 268, cysteine 271, cysteine 303, and glutamate 310.

The protein belongs to the IspG family. It depends on [4Fe-4S] cluster as a cofactor.

The enzyme catalyses (2E)-4-hydroxy-3-methylbut-2-enyl diphosphate + oxidized [flavodoxin] + H2O + 2 H(+) = 2-C-methyl-D-erythritol 2,4-cyclic diphosphate + reduced [flavodoxin]. Its pathway is isoprenoid biosynthesis; isopentenyl diphosphate biosynthesis via DXP pathway; isopentenyl diphosphate from 1-deoxy-D-xylulose 5-phosphate: step 5/6. Functionally, converts 2C-methyl-D-erythritol 2,4-cyclodiphosphate (ME-2,4cPP) into 1-hydroxy-2-methyl-2-(E)-butenyl 4-diphosphate. The protein is 4-hydroxy-3-methylbut-2-en-1-yl diphosphate synthase (flavodoxin) of Listeria monocytogenes serotype 4b (strain F2365).